Here is a 292-residue protein sequence, read N- to C-terminus: ATP synthase gamma chain (292 aa).

Belongs to the ATPase gamma chain family. F-type ATPases have 2 components, CF(1) - the catalytic core - and CF(0) - the membrane proton channel. CF(1) has five subunits: alpha(3), beta(3), gamma(1), delta(1), epsilon(1). CF(0) has three main subunits: a, b and c.

It localises to the cell inner membrane. Functionally, produces ATP from ADP in the presence of a proton gradient across the membrane. The gamma chain is believed to be important in regulating ATPase activity and the flow of protons through the CF(0) complex. This is ATP synthase gamma chain from Methylobacterium sp. (strain 4-46).